The primary structure comprises 372 residues: UDP-2-acetamido-2,6-beta-L-arabino-hexul-4-ose reductase (372 aa).

NAD(+)-binding positions include 7–30 (GANG…EVVP), L53, Y103, and K107. Residue Y103 is the Proton acceptor of the active site. Substrate-binding positions include N132 and 279-282 (HPGV).

Belongs to the NAD(P)-dependent epimerase/dehydratase family. Homodimer.

It carries out the reaction UDP-2-acetamido-2,6-dideoxy-beta-L-arabino-hex-4-ulose + NADH + H(+) = UDP-2-acetamido-2,6-dideoxy-beta-L-talose + NAD(+). It catalyses the reaction UDP-2-acetamido-2,6-dideoxy-beta-L-arabino-hex-4-ulose + NADPH + H(+) = UDP-2-acetamido-2,6-dideoxy-beta-L-talose + NADP(+). It participates in bacterial outer membrane biogenesis; LPS O-antigen biosynthesis. Functionally, bifunctional enzyme that mediates C-3 epimerization of the second intermediate followed by reduction at C-4 during serogroup O11 O-antigen biosynthesis, thus catalyzing the conversion of UDP-N-acetyl-D-glucosamine to precursors for the biosynthesis of O antigen. The polypeptide is UDP-2-acetamido-2,6-beta-L-arabino-hexul-4-ose reductase (Pseudomonas aeruginosa (strain ATCC 29260 / BCRC 12902 / CIP 102967 / NCIMB 11965 / PA103)).